The following is a 105-amino-acid chain: Circadian clock oscillator protein KaiB (105 aa).

The protein belongs to the KaiB family. As to quaternary structure, the KaiABC complex composition changes during the circadian cycle to control KaiC phosphorylation. Complexes KaiC(6), KaiA(2-4):KaiC(6), KaiB(6):KaiC(6) and KaiC(6):KaiB(6):KaiA(12) are among the most important forms, many form cooperatively. Undergoes a major conformational rearrangment; in the free state forms homotetramers as a dimer of dimers. When bound to the CI domain of KaiC switches to a monomeric thioredoxin-fold (KaiB(fs)). KaiB(fs) binds CikA, leading it to dephosphorylate phospho-RpaA.

In terms of biological role, key component of the KaiABC oscillator complex, which constitutes the main circadian regulator in cyanobacteria. Complex composition changes during the circadian cycle to control KaiC phosphorylation. KaiA stimulates KaiC autophosphorylation, while KaiB sequesters KaiA, leading to KaiC autodephosphorylation. Phospho-Ser-431 KaiC accumulation triggers binding of KaiB to form the KaiB(6):KaiC(6) complex, leading to changes in output regulators CikA and SasA. KaiB switches to a thioredoxin-like fold (KaiB(fs)) when bound to KaiC. KaiB(6):KaiC(6) formation exposes a site for KaiA binding that sequesters KaiA from KaiC, making the KaiC(6):KaiB(6):KaiA(12) complex that results in KaiC autodephosphorylation. Functionally, a metamorphic protein which reversibly switches between an inactive tetrameric fold and a rare, thioredoxin-like monomeric fold (KaiB(fs)). KaiB(fs) binds phospho-KaiC, KaiA and CikA. KaiA and CikA compete for binding to KaiB(fs), and KaiB(fs) and SasA compete for binding to KaiC, thus the clock oscillator and output signal pathway are tightly coupled. This Cyanothece sp. (strain PCC 7425 / ATCC 29141) protein is Circadian clock oscillator protein KaiB.